The primary structure comprises 1097 residues: MSVEAYGPSSQTLTFLDTEETELLGADTQGSEYDFTDFTLPSQTQTQGHTQSQLDNQLNGPDDGLHNGGMDDSVAKASQLLAELNFEEDEEDTYYTKDLPVHACRSYCGIHDPACVVYCNTSKKWFCNGRGNTSGSHIVNHLVRAKCKEVTLHKDGPLGETVLECYNCGCRNVFLLGFIPAKADSVVVLLCRQPCASQSSLKDINWDSSQWQPLIQDRCFLSWLVKIPSEQEQLRARQITAQQINKLEELWKDNPCATLEDLEKPGVDEEPQHVLLRYEDAYQYQNIFGPLVKLEADYDKKLKESQTQDNITVRWDLGLNKKRIAYFTLPKTDSDMRLMQGDEICLRYKGDLAPLWKGIGHVIKVPDSYGDEIAIELRTSVGAPVEIPHNYQVDFVWKSTSFDRMQSALKTFAVDETSVSGYIYHKLLGHEVEDVTIKCQLPKRFTANGLPDLNHSQVYAVKTVLQRPLSLIQGPPGTGKTVTSATIVYHLSRQGNGPVLVCAPSNIAVDQLTEKIDKTGLKVVRLCAKSREAIESPVSFLALHNQISNMDSMPELQKLQQLKDETGELSSADEKRYRALKRTAERELLMNADVIWCTCVRAGDPRLAKMQFRSILIDESTQATEPKCIGPVELGAKQLILGEITASWSCVMCKKAAKAGLSQSLFERLVVLGIRPIRLQVQYRMHPALSAFPSNIFYEGSLQNGVTAGDRIKKGFDFQWPQPEKPMFFYVTQGQEEIASSGTSYLNRTEAANVEKITTRLLKAGAKPDQIGIITPYEGQRSYLVQYMQFSGSLHTKLYQVEIASVDAFQGREKDFIILSCVRANEHQGIGFLNDPRRLNVALTRAKYGVIIVGNPKALSKQPLWNNLLNNYKEQKVLVEGPLNNLRESLMQFSKPRKLVNTINPRFMSTAMYDAREALIPGSAYDRSNTGGRPSNMYFQTHDQIGMIGAAASHLAALNIPIPFNLVMPPMPPPSYQGQTNGPAAGRGAMKGKSGRGGRQRIQWFWEPGGWSHAKQSDQPGWGFPVILSGATDTGLHLHEPAFPDEPARTLPARALPWDSYLGDEFKSQIDVALSQDSTYQGERAYQHGGVTGLSQY.

A compositionally biased stretch (low complexity) spans 42-53 (SQTQTQGHTQSQ). The segment at 42 to 67 (SQTQTQGHTQSQLDNQLNGPDDGLHN) is disordered. Residues 96–254 (TKDLPVHACR…NKLEELWKDN (159 aa)) enclose the Upf1 CH-rich domain. Cys104, Cys108, Cys119, Ser122, Cys127, His137, His141, Cys147, Cys165, Cys168, Cys191, and Cys195 together coordinate Zn(2+). The interval 104 to 137 (CRSYCGIHDPACVVYCNTSKKWFCNGRGNTSGSH) is C3H. Positions 119–147 (CNTSKKWFCNGRGNTSGSHIVNHLVRAKC) are CC/SHH/C. The C4 stretch occupies residues 165–195 (CYNCGCRNVFLLGFIPAKADSVVVLLCRQPC). ATP contacts are provided by residues Gln457, 474 to 481 (GPPGTGKT), Tyr683, and Glu813. Residues 977 to 998 (QGQTNGPAAGRGAMKGKSGRGG) are disordered.

Belongs to the DNA2/NAM7 helicase family.

It localises to the cytoplasm. Its subcellular location is the P-body. The catalysed reaction is ATP + H2O = ADP + phosphate + H(+). In terms of biological role, RNA-dependent helicase required for nonsense-mediated decay (NMD) of aberrant mRNAs containing premature stop codons and modulates the expression level of normal mRNAs. The formation of an rent1-rent2-rent3 surveillance complex is believed to activate NMD. The protein is Putative regulator of nonsense transcripts 1 (rent1) of Takifugu rubripes (Japanese pufferfish).